We begin with the raw amino-acid sequence, 568 residues long: Protein AF-9 (568 aa).

In terms of domain architecture, YEATS spans 1–138 (MASSCAVQVK…EDFRRKLLKA (138 aa)). Histone H3K9cr binding stretches follow at residues 78–80 (YAG) and 106–108 (LHL). The tract at residues 138–475 (AGGDPNRSIH…PPPPLLKTNN (338 aa)) is disordered. A compositionally biased stretch (low complexity) spans 149-190 (SSSSSSSSSSSSSSSSSSSSSSSSSSSSSSSSSSSSSSSSSS). The span at 202-265 (EHKEKPSKDS…PKPMSKEPKP (64 aa)) shows a compositional bias: basic and acidic residues. 2 positions are modified to phosphoserine: Ser288 and Ser294. Positions 295–300 (AKKRKK) match the Nuclear localization signal motif. The span at 303 to 313 (SEALFKSFSSA) shows a compositional bias: low complexity. A compositionally biased stretch (basic and acidic residues) spans 322–349 (ADKKQIKDKSHVKMGKVKIESETSEKKK). Lys339 participates in a covalent cross-link: Glycyl lysine isopeptide (Lys-Gly) (interchain with G-Cter in SUMO2). Over residues 357–368 (DIVDPNDSDVEE) the composition is skewed to acidic residues. Positions 371-395 (SSKSDSEQPSPASSSSSSSSSFTPS) are enriched in low complexity. Ser412 and Ser419 each carry phosphoserine. Residues 414-429 (DNEEESDEVEDNDNDS) are compositionally biased toward acidic residues. A compositionally biased stretch (low complexity) spans 445–461 (VSLSDGSDSESSSASSP). Phosphoserine is present on Ser483.

In terms of assembly, component of the super elongation complex (SEC), at least composed of EAF1, EAF2, CDK9, MLLT3/AF9, AFF (AFF1 or AFF4), the P-TEFb complex and ELL (ELL, ELL2 or ELL3). Interacts with BCOR. Interacts with CBX8. Interacts with ALKBH4. In terms of tissue distribution, enriched in undifferentiated hematopoietic stem cells in fetal liver, cord blood and bone marrow.

The protein resides in the nucleus. The protein localises to the chromosome. With respect to regulation, crotonylated lysine binding is strongly inhibited by the peptide XL-07i, carrying a 2-furancarbonyl side chain and capped with a hydrophobic carboxybenzyl group. XL-07i targets the unique pi-pi-pi stacking interaction at the crotonylation recognition site. In terms of biological role, chromatin reader component of the super elongation complex (SEC), a complex required to increase the catalytic rate of RNA polymerase II transcription by suppressing transient pausing by the polymerase at multiple sites along the DNA. Specifically recognizes and binds acylated histone H3, with a preference for histone H3 that is crotonylated. Crotonylation marks active promoters and enhancers and confers resistance to transcriptional repressors. Recognizes and binds histone H3 crotonylated at 'Lys-9' (H3K9cr), and with slightly lower affinity histone H3 crotonylated at 'Lys-18' (H3K18cr). Also recognizes and binds histone H3 acetylated and butyrylated at 'Lys-9' (H3K9ac and H3K9bu, respectively), but with lower affinity than crotonylated histone H3. In the SEC complex, MLLT3 is required to recruit the complex to crotonylated histones. Recruitment of the SEC complex to crotonylated histones promotes recruitment of DOT1L on active chromatin to deposit histone H3 'Lys-79' methylation (H3K79me). Plays a key role in hematopoietic stem cell (HSC) maintenance by preserving, rather than conferring, HSC stemness. Acts by binding to the transcription start site of active genes in HSCs and sustaining level of H3K79me2, probably by recruiting DOT1L. The protein is Protein AF-9 of Homo sapiens (Human).